The sequence spans 36 residues: MRIVLVGPPGAGKGTQAAYLAQNLSIPHIATGDLFR.

Residue 10-15 (GAGKGT) coordinates ATP. Residues 30–36 (ATGDLFR) are NMP. Residues Thr-31 and Arg-36 each coordinate AMP.

The protein belongs to the adenylate kinase family. As to quaternary structure, monomer.

The protein resides in the cytoplasm. The enzyme catalyses AMP + ATP = 2 ADP. It functions in the pathway purine metabolism; AMP biosynthesis via salvage pathway; AMP from ADP: step 1/1. Catalyzes the reversible transfer of the terminal phosphate group between ATP and AMP. Plays an important role in cellular energy homeostasis and in adenine nucleotide metabolism. The protein is Adenylate kinase (adk) of Streptomyces griseus.